A 125-amino-acid chain; its full sequence is Aspercryptin biosynthesis cluster protein K (125 aa).

The tract at residues Q104–Y125 is disordered. Basic and acidic residues predominate over residues S113–Y125.

It participates in secondary metabolite biosynthesis. Part of the gene cluster that mediates the biosynthesis of aspercryptins, linear lipopeptides built from six amino acids including 2 highly unusual and nonproteogenic amino acids, 2-amino-octanoic acid (2aoa) and 2-amino-dodecanol (2adol). The core structure of aspercryptins is as follows: Ser/Ala-Thr-Ile/Val-2aoa-Asn-2adol. The first step of aspercryptin biosynthesis is the generation of the fatty acid precursors, octanoic and dodecanoic acids, by the FAS subunits atnF and atnM. The fatty acid precursors are likely transformed into the corresponding alpha-amino fatty acids in three steps. First, they are hydroxylated by the cytochrome P450 monooxygenase atnE, then oxidized to the corresponding alpha-keto acids by the NAD(P)-dependent oxidoreductase atnD, and finally converted to the alpha-amino fatty acids by the PLP-dependent aminotransferases atnH or atnJ. the alpha-amino fatty acids, 2-amino-octanoic and 2-amino-dodecanoic acids, are recognized, activated, and covalently tethered to the NRPS atnA by its fourth and sixth adenylation domains. The second module of atnA is the Thr module and contains an epimerase (E) domain responsible for the epimerization of Thr to D-allo-Thr. Additionally, despite atnA having only one epimerase domain, the first amino acid of aspercryptin A1 is D-Ser, suggesting that serine is either loaded directly as D-Ser on the first module or that the epimerase domain in the threonine module epimerizes both L-Ser and L-Thr. After condensation of the hexapeptide of aspercryptin, the C-terminal reductase (TE) domain might be involved in the reductive release and production of the aldehyde hexapeptide. Further reduction would generate aspercryptins. The variety of aspercryptins produced reflects the flexibility of the atnA NRPS, allowing incorporation of alanine instead of serine, valine for isoleucine, and a C10 fatty amino alcohol instead of the C12 version. AtnB seems to be involved in the selectivity for Ile versus Val by the third module. Moreover, type B, C and D aspercryptins have an additional N-terminal cichorine, acetyl and propionyl group respectively. This is Aspercryptin biosynthesis cluster protein K from Emericella nidulans (strain FGSC A4 / ATCC 38163 / CBS 112.46 / NRRL 194 / M139) (Aspergillus nidulans).